A 466-amino-acid chain; its full sequence is Chromosomal replication initiator protein DnaA (466 aa).

The domain I, interacts with DnaA modulators stretch occupies residues 1–86 (MSLSLWQQCL…EVGTKPVTQT (86 aa)). Residues 86 to 129 (TLKTPVHNVVAPAQTTTAQPQRVAPAARSGWDNVPAPAEPTYRS) form a domain II region. Positions 130–346 (NVNVKHTFDN…GALNRVIANA (217 aa)) are domain III, AAA+ region. Residues G174, G176, K177, and T178 each contribute to the ATP site. The interval 347–466 (NFTGRAITID…FSNLIRTLSS (120 aa)) is domain IV, binds dsDNA.

This sequence belongs to the DnaA family. In terms of assembly, oligomerizes as a right-handed, spiral filament on DNA at oriC.

Its subcellular location is the cytoplasm. Plays an essential role in the initiation and regulation of chromosomal replication. ATP-DnaA binds to the origin of replication (oriC) to initiate formation of the DNA replication initiation complex once per cell cycle. Binds the DnaA box (a 9 base pair repeat at the origin) and separates the double-stranded (ds)DNA. Forms a right-handed helical filament on oriC DNA; dsDNA binds to the exterior of the filament while single-stranded (ss)DNA is stabiized in the filament's interior. The ATP-DnaA-oriC complex binds and stabilizes one strand of the AT-rich DNA unwinding element (DUE), permitting loading of DNA polymerase. After initiation quickly degrades to an ADP-DnaA complex that is not apt for DNA replication. Binds acidic phospholipids. This chain is Chromosomal replication initiator protein DnaA, found in Salmonella agona (strain SL483).